Consider the following 578-residue polypeptide: Avenacosidase 2 (578 aa).

Residues 1 to 57 (MALLCSALSNSTHPSFRSHIAGANSENLWHLSAHPAQKSKRRCNLTLSSRAAARISS) constitute a chloroplast transit peptide. A beta-D-glucoside contacts are provided by residues Gln-89, His-193, and 238-239 (NE). Catalysis depends on Glu-239, which acts as the Proton donor. Cys-258 and Cys-264 are joined by a disulfide. A beta-D-glucoside-binding positions include Tyr-381, Glu-454, Trp-504, 511–512 (EW), and Phe-520. Glu-454 serves as the catalytic Nucleophile.

Belongs to the glycosyl hydrolase 1 family. As to quaternary structure, heteromultimer with P60A in a 1:1 stoichiometry. Aggregates to form the fibrillar stromacentre.

The protein resides in the plastid. The protein localises to the chloroplast stroma. It carries out the reaction avenacoside B + H2O = 26-desgluco-avenacoside B + D-glucose. Beta-glucosidase acting as a preformed defense system. Hydrolyzes the bisdesmosides avenacosides A and B to 26-desgluco-avenacosides exhibiting fungicidal activity. Can use beta-fucoside &gt; beta-glucoside &gt; beta-galactoside &gt; beta-xyloside as substrates, but not alpha-glycosides, beta-thioglucosides and disaccharides. The chain is Avenacosidase 2 (P60B) from Avena sativa (Oat).